Consider the following 59-residue polypeptide: Prokaryotic ubiquitin-like protein UBact (59 aa).

The segment at 1-59 is disordered; it reads MEMTDPLRREEKKESSPDPKEESGPSRPDVSRPGRDSLLKRMKKVDPKQSEKYKQRTGQ. Glutamine 59 is modified (deamidated glutamine). Glutamine 59 is covalently cross-linked (Isoglutamyl lysine isopeptide (Gln-Lys) (interchain with K-? in acceptor proteins)).

It belongs to the ubiquitin-like protein UBact family. Post-translationally, may be modified by deamidation of its C-terminal glutamine to glutamate by the adjacently encoded deamidase. This could be a prerequisite to the subsequent conjugation, as shown in the other prokaryotic ubiquitin-like protein Pup.

Its function is as follows. May function as a protein modifier covalently attached to lysine residues of substrate proteins. This may serve to target the modified proteins for degradation by proteasomes. The protein is Prokaryotic ubiquitin-like protein UBact of Nitrospina gracilis (strain 3/211).